A 218-amino-acid chain; its full sequence is Large ribosomal subunit protein uL3 (218 aa).

The protein belongs to the universal ribosomal protein uL3 family. As to quaternary structure, part of the 50S ribosomal subunit. Forms a cluster with proteins L14 and L19.

In terms of biological role, one of the primary rRNA binding proteins, it binds directly near the 3'-end of the 23S rRNA, where it nucleates assembly of the 50S subunit. This Corynebacterium aurimucosum (strain ATCC 700975 / DSM 44827 / CIP 107346 / CN-1) (Corynebacterium nigricans) protein is Large ribosomal subunit protein uL3.